Consider the following 573-residue polypeptide: Dilute domain-containing protein SPAC25B8.08 (573 aa).

One can recognise a Dilute domain in the interval 180 to 464 (NAFLCEVNQV…LKKLDAFHEE (285 aa)).

The protein resides in the cytoplasm. The protein localises to the golgi apparatus. The protein is Dilute domain-containing protein SPAC25B8.08 of Schizosaccharomyces pombe (strain 972 / ATCC 24843) (Fission yeast).